Consider the following 286-residue polypeptide: Putative sugar uptake protein lmo0176 (286 aa).

Helical transmembrane passes span 4–26, 33–55, 114–136, 149–167, 177–194, 207–226, 230–252, and 264–283; these read MIAL…FGGS, GMTL…VYTL, LRII…TSYA, GLIT…VVLI, AILP…IMTH, LLLT…MVHA, VGVA…GGII, and LFVI…IGVA.

It belongs to the GRP transporter (TC 2.A.7.5) family.

Its subcellular location is the cell membrane. In Listeria monocytogenes serovar 1/2a (strain ATCC BAA-679 / EGD-e), this protein is Putative sugar uptake protein lmo0176.